A 243-amino-acid polypeptide reads, in one-letter code: Segregation and condensation protein A (243 aa).

The protein belongs to the ScpA family. In terms of assembly, component of a cohesin-like complex composed of ScpA, ScpB and the Smc homodimer, in which ScpA and ScpB bind to the head domain of Smc. The presence of the three proteins is required for the association of the complex with DNA.

It localises to the cytoplasm. In terms of biological role, participates in chromosomal partition during cell division. May act via the formation of a condensin-like complex containing Smc and ScpB that pull DNA away from mid-cell into both cell halves. In Staphylococcus aureus (strain NCTC 8325 / PS 47), this protein is Segregation and condensation protein A.